We begin with the raw amino-acid sequence, 226 residues long: Large ribosomal subunit protein uL1 (226 aa).

This sequence belongs to the universal ribosomal protein uL1 family. In terms of assembly, part of the 50S ribosomal subunit.

Functionally, binds directly to 23S rRNA. The L1 stalk is quite mobile in the ribosome, and is involved in E site tRNA release. In terms of biological role, protein L1 is also a translational repressor protein, it controls the translation of the L11 operon by binding to its mRNA. In Mycoplasma capricolum subsp. capricolum (strain California kid / ATCC 27343 / NCTC 10154), this protein is Large ribosomal subunit protein uL1.